A 213-amino-acid chain; its full sequence is High frequency lysogenization protein HflD homolog (213 aa).

Residues 79-122 (QGLNAELTRYTLSLMVLERKLSSAKGALNTLGDRINGLQRQLDH) are a coiled coil.

This sequence belongs to the HflD family.

It localises to the cytoplasm. Its subcellular location is the cell inner membrane. This Salmonella agona (strain SL483) protein is High frequency lysogenization protein HflD homolog.